The following is a 106-amino-acid chain: Protamine (106 aa).

The disordered stretch occupies residues A1–R106.

As to expression, sperm.

The protein localises to the nucleus. Its subcellular location is the chromosome. This Phorcus turbinatus (Sea snail) protein is Protamine.